Reading from the N-terminus, the 228-residue chain is Octanoyltransferase (228 aa).

The 182-residue stretch at 31 to 212 (GETDGILILL…KFSEVFGIHF (182 aa)) folds into the BPL/LPL catalytic domain. Substrate contacts are provided by residues 76 to 83 (RGGKITFH), 143 to 145 (AIG), and 156 to 158 (GIA). The Acyl-thioester intermediate role is filled by C174.

The protein belongs to the LipB family.

The protein resides in the cytoplasm. The catalysed reaction is octanoyl-[ACP] + L-lysyl-[protein] = N(6)-octanoyl-L-lysyl-[protein] + holo-[ACP] + H(+). Its pathway is protein modification; protein lipoylation via endogenous pathway; protein N(6)-(lipoyl)lysine from octanoyl-[acyl-carrier-protein]: step 1/2. Functionally, catalyzes the transfer of endogenously produced octanoic acid from octanoyl-acyl-carrier-protein onto the lipoyl domains of lipoate-dependent enzymes. Lipoyl-ACP can also act as a substrate although octanoyl-ACP is likely to be the physiological substrate. The polypeptide is Octanoyltransferase (Thermoanaerobacter pseudethanolicus (strain ATCC 33223 / 39E) (Clostridium thermohydrosulfuricum)).